The sequence spans 974 residues: Bifunctional glutamine synthetase adenylyltransferase/adenylyl-removing enzyme (974 aa).

The adenylyl removase stretch occupies residues 1-464 (MKNAFLKTQL…HYAALFENEQ (464 aa)). The tract at residues 468–974 (LEIGNLVFTG…YSIFKQVMKY (507 aa)) is adenylyl transferase.

Belongs to the GlnE family. Mg(2+) serves as cofactor.

It carries out the reaction [glutamine synthetase]-O(4)-(5'-adenylyl)-L-tyrosine + phosphate = [glutamine synthetase]-L-tyrosine + ADP. The enzyme catalyses [glutamine synthetase]-L-tyrosine + ATP = [glutamine synthetase]-O(4)-(5'-adenylyl)-L-tyrosine + diphosphate. In terms of biological role, involved in the regulation of glutamine synthetase GlnA, a key enzyme in the process to assimilate ammonia. When cellular nitrogen levels are high, the C-terminal adenylyl transferase (AT) inactivates GlnA by covalent transfer of an adenylyl group from ATP to specific tyrosine residue of GlnA, thus reducing its activity. Conversely, when nitrogen levels are low, the N-terminal adenylyl removase (AR) activates GlnA by removing the adenylyl group by phosphorolysis, increasing its activity. The regulatory region of GlnE binds the signal transduction protein PII (GlnB) which indicates the nitrogen status of the cell. This Bartonella henselae (strain ATCC 49882 / DSM 28221 / CCUG 30454 / Houston 1) (Rochalimaea henselae) protein is Bifunctional glutamine synthetase adenylyltransferase/adenylyl-removing enzyme.